The chain runs to 330 residues: MATH domain and coiled-coil domain-containing protein At3g58210 (330 aa).

Positions 6–133 constitute an MATH domain; the sequence is DNKFTWVIQN…NDELKIVAEV (128 aa). Residues 263–314 are a coiled coil; that stretch reads FKVDWLEKKLEEVKKKKEEEQTGEARIQELEEELKEFKQKCLDREAMLEKEK.

The sequence is that of MATH domain and coiled-coil domain-containing protein At3g58210 from Arabidopsis thaliana (Mouse-ear cress).